The sequence spans 2617 residues: DNA-directed RNA polymerase subunit beta'' (2617 aa).

4 residues coordinate Zn(2+): Cys263, Cys334, Cys341, and Cys344.

The protein belongs to the RNA polymerase beta' chain family. RpoC2 subfamily. In terms of assembly, in plastids the minimal PEP RNA polymerase catalytic core is composed of four subunits: alpha, beta, beta', and beta''. When a (nuclear-encoded) sigma factor is associated with the core the holoenzyme is formed, which can initiate transcription. It depends on Zn(2+) as a cofactor.

The protein resides in the plastid. The protein localises to the chloroplast. It catalyses the reaction RNA(n) + a ribonucleoside 5'-triphosphate = RNA(n+1) + diphosphate. Its function is as follows. DNA-dependent RNA polymerase catalyzes the transcription of DNA into RNA using the four ribonucleoside triphosphates as substrates. In Oedogonium cardiacum (Filamentous green alga), this protein is DNA-directed RNA polymerase subunit beta''.